The primary structure comprises 119 residues: MPRVKRGVTARARHKKVLALAKGFRGRRGNVYRVAKEAVMKAGQYAYRDRRTKKRVFRQLWIARINAAARQCGMTYSQFANGLKKANIEIDRKVLSDIAVHDMAAFASIVDQVKAKLAA.

This sequence belongs to the bacterial ribosomal protein bL20 family.

Functionally, binds directly to 23S ribosomal RNA and is necessary for the in vitro assembly process of the 50S ribosomal subunit. It is not involved in the protein synthesizing functions of that subunit. The chain is Large ribosomal subunit protein bL20 from Albidiferax ferrireducens (strain ATCC BAA-621 / DSM 15236 / T118) (Rhodoferax ferrireducens).